Here is a 291-residue protein sequence, read N- to C-terminus: Homoserine kinase (291 aa).

An ATP-binding site is contributed by R80 to A90.

The protein belongs to the GHMP kinase family. Homoserine kinase subfamily.

It is found in the cytoplasm. It catalyses the reaction L-homoserine + ATP = O-phospho-L-homoserine + ADP + H(+). It functions in the pathway amino-acid biosynthesis; L-threonine biosynthesis; L-threonine from L-aspartate: step 4/5. In terms of biological role, catalyzes the ATP-dependent phosphorylation of L-homoserine to L-homoserine phosphate. The protein is Homoserine kinase of Haloquadratum walsbyi (strain DSM 16790 / HBSQ001).